The following is a 323-amino-acid chain: NADH-ubiquinone oxidoreductase chain 1 (323 aa).

8 helical membrane passes run 4 to 24 (LFTVLELLSFLVPVLLAVAFL), 73 to 93 (YLFFLSPLLFMALALLLWNLM), 106 to 126 (LLLVLGLSSLSVYAILGSGWA), 150 to 170 (LALILLSLIIITSSFNLTYIM), 175 to 195 (FSWFALSCLPLFYIWFVSTLA), 226 to 246 (LFFIAEYANIILMNLFSVVIF), 256 to 276 (LFPLNVLTIGLKTTLLVFLFL), and 303 to 323 (IGALCATITIVLTLGIYLPLF).

The protein belongs to the complex I subunit 1 family.

It is found in the mitochondrion inner membrane. The enzyme catalyses a ubiquinone + NADH + 5 H(+)(in) = a ubiquinol + NAD(+) + 4 H(+)(out). Core subunit of the mitochondrial membrane respiratory chain NADH dehydrogenase (Complex I) that is believed to belong to the minimal assembly required for catalysis. Complex I functions in the transfer of electrons from NADH to the respiratory chain. The immediate electron acceptor for the enzyme is believed to be ubiquinone. In Paracentrotus lividus (Common sea urchin), this protein is NADH-ubiquinone oxidoreductase chain 1 (ND1).